Here is a 348-residue protein sequence, read N- to C-terminus: Protein pelota homolog (348 aa).

The protein belongs to the eukaryotic release factor 1 family. Pelota subfamily. Monomer. The cofactor is a divalent metal cation.

Its subcellular location is the cytoplasm. May function in recognizing stalled ribosomes, interact with stem-loop structures in stalled mRNA molecules, and effect endonucleolytic cleavage of the mRNA. May play a role in the release non-functional ribosomes and degradation of damaged mRNAs. Has endoribonuclease activity. The polypeptide is Protein pelota homolog (Methanococcus maripaludis (strain DSM 14266 / JCM 13030 / NBRC 101832 / S2 / LL)).